The primary structure comprises 335 residues: MTAPKVGINGFGRIGRLVLRAAIEKGTCQVVAINDPFIDLDYMAYMLKYDSTHGRYAGDVSIKDGKLQVDGNSITVFAHRDPAEIPWATAAADYIVEATGVFTLKDKAAAHFKGGAKKVVISAPSKDAPMFVCGVNEAKYTPDLDIISNASCTTNCLAPLVKVIHEKYGIEEGLMTTVHATTATQKTVDGPSNKDWRGGRGRGRNIIPSSTGAAKAVGKVMPELNGKLTGMAFRVPTPDVSVVDLTVRLASETTYEDIKATMKAAADDSMKGIMKYTEDAVVSTDFIHDDASCIFDASAGIMLNSKFCKLVAWYDNEWGYSNRVVDLIAHISKVQ.

Residues 13-14 (RI), Asp35, and Arg80 contribute to the NAD(+) site. D-glyceraldehyde 3-phosphate is bound by residues 151-153 (SCT), Thr182, 211-212 (TG), and Arg234. The active-site Nucleophile is Cys152. Asn316 is a binding site for NAD(+).

It belongs to the glyceraldehyde-3-phosphate dehydrogenase family. As to quaternary structure, homotetramer.

It localises to the cytoplasm. It catalyses the reaction D-glyceraldehyde 3-phosphate + phosphate + NAD(+) = (2R)-3-phospho-glyceroyl phosphate + NADH + H(+). The protein operates within carbohydrate degradation; glycolysis; pyruvate from D-glyceraldehyde 3-phosphate: step 1/5. The chain is Glyceraldehyde-3-phosphate dehydrogenase, cytosolic (GAPC) from Chondrus crispus (Carrageen Irish moss).